Here is a 204-residue protein sequence, read N- to C-terminus: MSREQLSLEIIEAGRFLYGRGWSPATSSNYSARLSASEALLTVSGKHKGQLGPDDVLATDLAGNSLEPGKKPSAETLLHTQLYSCRPQVGAVLHTHSVNATVLSRLTTADHLVFEDYELQKAFSGVVTHESQVVVPIFDNDQDIARLAAKVQPWLDTHPECAGYLIRGHGLYTWGAKMSDALRQIEAFEFLFECELKMRAVMNR.

H94 and H96 together coordinate Zn(2+).

Belongs to the aldolase class II family. MtnB subfamily. Zn(2+) serves as cofactor.

It carries out the reaction 5-(methylsulfanyl)-D-ribulose 1-phosphate = 5-methylsulfanyl-2,3-dioxopentyl phosphate + H2O. The protein operates within amino-acid biosynthesis; L-methionine biosynthesis via salvage pathway; L-methionine from S-methyl-5-thio-alpha-D-ribose 1-phosphate: step 2/6. Functionally, catalyzes the dehydration of methylthioribulose-1-phosphate (MTRu-1-P) into 2,3-diketo-5-methylthiopentyl-1-phosphate (DK-MTP-1-P). This Pseudomonas syringae pv. syringae (strain B728a) protein is Methylthioribulose-1-phosphate dehydratase.